A 155-amino-acid polypeptide reads, in one-letter code: Regulatory protein RecX (155 aa).

The protein belongs to the RecX family.

It localises to the cytoplasm. Modulates RecA activity. The protein is Regulatory protein RecX of Pseudomonas syringae pv. tomato (strain ATCC BAA-871 / DC3000).